The chain runs to 540 residues: tRNA-2-methylthio-N(6)-dimethylallyladenosine synthase (540 aa).

In terms of domain architecture, MTTase N-terminal spans 41 to 157 (RTYEVRTFGC…LPTLLERSAH (117 aa)). [4Fe-4S] cluster-binding residues include Cys50, Cys86, Cys120, Cys194, Cys198, and Cys201. A Radical SAM core domain is found at 180 to 416 (RESAYSGWVS…IALQERIQAE (237 aa)). One can recognise a TRAM domain in the interval 419 to 486 (KELVGTTQEL…PFFLIADGPL (68 aa)).

Belongs to the methylthiotransferase family. MiaB subfamily. Monomer. [4Fe-4S] cluster is required as a cofactor.

It localises to the cytoplasm. The catalysed reaction is N(6)-dimethylallyladenosine(37) in tRNA + (sulfur carrier)-SH + AH2 + 2 S-adenosyl-L-methionine = 2-methylsulfanyl-N(6)-dimethylallyladenosine(37) in tRNA + (sulfur carrier)-H + 5'-deoxyadenosine + L-methionine + A + S-adenosyl-L-homocysteine + 2 H(+). Functionally, catalyzes the methylthiolation of N6-(dimethylallyl)adenosine (i(6)A), leading to the formation of 2-methylthio-N6-(dimethylallyl)adenosine (ms(2)i(6)A) at position 37 in tRNAs that read codons beginning with uridine. The sequence is that of tRNA-2-methylthio-N(6)-dimethylallyladenosine synthase from Corynebacterium urealyticum (strain ATCC 43042 / DSM 7109).